A 124-amino-acid chain; its full sequence is Holo-[acyl-carrier-protein] synthase (124 aa).

Mg(2+) is bound by residues Asp8 and Glu60.

This sequence belongs to the P-Pant transferase superfamily. AcpS family. Mg(2+) serves as cofactor.

Its subcellular location is the cytoplasm. It carries out the reaction apo-[ACP] + CoA = holo-[ACP] + adenosine 3',5'-bisphosphate + H(+). Functionally, transfers the 4'-phosphopantetheine moiety from coenzyme A to a Ser of acyl-carrier-protein. In Wolbachia pipientis subsp. Culex pipiens (strain wPip), this protein is Holo-[acyl-carrier-protein] synthase.